The primary structure comprises 195 residues: Imidazoleglycerol-phosphate dehydratase (195 aa).

This sequence belongs to the imidazoleglycerol-phosphate dehydratase family.

The protein resides in the cytoplasm. The catalysed reaction is D-erythro-1-(imidazol-4-yl)glycerol 3-phosphate = 3-(imidazol-4-yl)-2-oxopropyl phosphate + H2O. It functions in the pathway amino-acid biosynthesis; L-histidine biosynthesis; L-histidine from 5-phospho-alpha-D-ribose 1-diphosphate: step 6/9. The polypeptide is Imidazoleglycerol-phosphate dehydratase (Desulfosudis oleivorans (strain DSM 6200 / JCM 39069 / Hxd3) (Desulfococcus oleovorans)).